Here is a 229-residue protein sequence, read N- to C-terminus: MKQLIHNDWWEVLKPQFESAYYAQLHNFLKEEYTHQTIYPEMHHIFEAFEWTPFSKVKVVILGQDPYHGPNQAHGCSFSVLPGVPVPPSLQNIYKELQSDLGCTPVNHGYLKKWADQGVLLLNSVLTVRAGQAYSHRGHGWEQLTDAAIHALSERPKPVVFILWGRAARNKKQLINTKTNIVLESAHPSPLSANRGFFGSRPFSKTNEALQAMGEQPIDWQLPAEPNYR.

Asp65 functions as the Proton acceptor in the catalytic mechanism.

This sequence belongs to the uracil-DNA glycosylase (UDG) superfamily. UNG family.

It localises to the cytoplasm. It carries out the reaction Hydrolyzes single-stranded DNA or mismatched double-stranded DNA and polynucleotides, releasing free uracil.. In terms of biological role, excises uracil residues from the DNA which can arise as a result of misincorporation of dUMP residues by DNA polymerase or due to deamination of cytosine. This chain is Uracil-DNA glycosylase, found in Limosilactobacillus reuteri (strain DSM 20016) (Lactobacillus reuteri).